Here is a 497-residue protein sequence, read N- to C-terminus: MAATQKSLCAIPADPIEFPADANTLDYARSEDAKCPIRHMREHFIFPTRASLKKKALDGRLPAYPPNHAKPGETATAQNGTSNTNDDNVTPAVYFCGNSLGLQPKATRDHINAQLETWASIGVHGHFTSWDNSPLKSWQDMAADCAAQSASVVGASPDEIAIMNTLTANLHFMMASFYRPTEKRHKIISEWKPFPSDTYAIASQIQWHGFDTATSLVELHPDENYYISTEKILATIDEHAESTALLLLPGIQYWSGQLFDMPLITAHARAKGIVVGWDLAHAVGNVPLSLHDWDVDFAIWCTYKYLNAGPGAIAGAFVHERHGKVDSDGFKLRLSGWYGNNKATRFNMAKDFDPTPGAQGWVVSNPSGIDLASLGAALSVYNLTTPADLRKKSLWLTAYAEHLLNGILKDEAASSAGDGKKPAFRIITPSNKNERGAQLSVLLREGLLDVVGEKMEAAGVVCDRRKPDVMRVAPVPMYNSYEDVWRCVDALRKAVMS.

The tract at residues 59 to 86 (GRLPAYPPNHAKPGETATAQNGTSNTND) is disordered. Residues 75–86 (ATAQNGTSNTND) show a composition bias toward polar residues. Residues L166, T167, 194-197 (FPSD), D278, H281, and Y303 contribute to the pyridoxal 5'-phosphate site. K304 is modified (N6-(pyridoxal phosphate)lysine). The pyridoxal 5'-phosphate site is built by W337 and N365.

It belongs to the kynureninase family. As to quaternary structure, homodimer. The cofactor is pyridoxal 5'-phosphate.

The protein localises to the cytoplasm. It carries out the reaction L-kynurenine + H2O = anthranilate + L-alanine + H(+). The enzyme catalyses 3-hydroxy-L-kynurenine + H2O = 3-hydroxyanthranilate + L-alanine + H(+). It functions in the pathway amino-acid degradation; L-kynurenine degradation; L-alanine and anthranilate from L-kynurenine: step 1/1. The protein operates within cofactor biosynthesis; NAD(+) biosynthesis; quinolinate from L-kynurenine: step 2/3. Its function is as follows. Catalyzes the cleavage of L-kynurenine (L-Kyn) and L-3-hydroxykynurenine (L-3OHKyn) into anthranilic acid (AA) and 3-hydroxyanthranilic acid (3-OHAA), respectively. In Pyricularia oryzae (strain 70-15 / ATCC MYA-4617 / FGSC 8958) (Rice blast fungus), this protein is Kynureninase.